A 273-amino-acid polypeptide reads, in one-letter code: Ribosomal RNA small subunit methyltransferase A (273 aa).

S-adenosyl-L-methionine-binding residues include Asn-18, Leu-20, Gly-45, Glu-66, Asp-91, and Asn-113.

It belongs to the class I-like SAM-binding methyltransferase superfamily. rRNA adenine N(6)-methyltransferase family. RsmA subfamily.

It localises to the cytoplasm. It carries out the reaction adenosine(1518)/adenosine(1519) in 16S rRNA + 4 S-adenosyl-L-methionine = N(6)-dimethyladenosine(1518)/N(6)-dimethyladenosine(1519) in 16S rRNA + 4 S-adenosyl-L-homocysteine + 4 H(+). Its function is as follows. Specifically dimethylates two adjacent adenosines (A1518 and A1519) in the loop of a conserved hairpin near the 3'-end of 16S rRNA in the 30S particle. May play a critical role in biogenesis of 30S subunits. This is Ribosomal RNA small subunit methyltransferase A from Shigella dysenteriae serotype 1 (strain Sd197).